The following is a 156-amino-acid chain: ATP synthase subunit b (156 aa).

The chain crosses the membrane as a helical span at residues L7–P27.

It belongs to the ATPase B chain family. As to quaternary structure, F-type ATPases have 2 components, F(1) - the catalytic core - and F(0) - the membrane proton channel. F(1) has five subunits: alpha(3), beta(3), gamma(1), delta(1), epsilon(1). F(0) has four main subunits: a(1), b(2) and c(10-14). The alpha and beta chains form an alternating ring which encloses part of the gamma chain. F(1) is attached to F(0) by a central stalk formed by the gamma and epsilon chains, while a peripheral stalk is formed by the delta and b chains.

Its subcellular location is the cell inner membrane. F(1)F(0) ATP synthase produces ATP from ADP in the presence of a proton or sodium gradient. F-type ATPases consist of two structural domains, F(1) containing the extramembraneous catalytic core and F(0) containing the membrane proton channel, linked together by a central stalk and a peripheral stalk. During catalysis, ATP synthesis in the catalytic domain of F(1) is coupled via a rotary mechanism of the central stalk subunits to proton translocation. In terms of biological role, component of the F(0) channel, it forms part of the peripheral stalk, linking F(1) to F(0). The sequence is that of ATP synthase subunit b from Methylibium petroleiphilum (strain ATCC BAA-1232 / LMG 22953 / PM1).